We begin with the raw amino-acid sequence, 792 residues long: Kinesin-related protein 2 (792 aa).

Disordered regions lie at residues 22 to 50 (TINS…PPST) and 162 to 183 (NNIN…SPVQ). Over residues 34–50 (ASSSSQSNDRISYPPST) the composition is skewed to polar residues. Residues 284–423 (RLSLSIQDIK…LEKSRSDEKV (140 aa)) are a coiled coil. The Kinesin motor domain occupies 437-781 (NIRVFCRIRP…LRFAAKVNSC (345 aa)). ATP is bound at residue 528-535 (GQTGSGKT).

It belongs to the TRAFAC class myosin-kinesin ATPase superfamily. Kinesin family. NCD subfamily.

It is found in the nucleus. Its subcellular location is the cytoplasm. The protein localises to the cytoskeleton. It localises to the spindle. Functionally, microtubule-dependent motor that is probably involved in microtubule organization in the mitotic spindle. The protein is Kinesin-related protein 2 (kif2) of Dictyostelium discoideum (Social amoeba).